Here is a 490-residue protein sequence, read N- to C-terminus: DNA-binding protein D-ETS-3 (490 aa).

Disordered regions lie at residues 190 to 255 (TASS…SGGG) and 271 to 294 (SSTQ…SQLR). Residues 196–207 (HVEHKVRADKST) show a composition bias toward basic and acidic residues. Positions 211–227 (ATTSSHAAAPSSSSSAS) are enriched in low complexity. Residues 244-255 (GTGGGASASGGG) show a composition bias toward gly residues. A compositionally biased stretch (low complexity) spans 271 to 280 (SSTQSQGYSS). A DNA-binding region (ETS) is located at residues 317–397 (IQLWQFLLEL…HGKRYAYKFD (81 aa)).

This sequence belongs to the ETS family. As to expression, embryonic ventral nervous system, higher in the thoracic than abdominal segments.

It is found in the nucleus. The sequence is that of DNA-binding protein D-ETS-3 (Ets65A) from Drosophila melanogaster (Fruit fly).